A 306-amino-acid chain; its full sequence is Bifunctional protein FolD (306 aa).

NADP(+)-binding positions include 169 to 171, Ser-194, and Ile-235; that span reads GRS.

It belongs to the tetrahydrofolate dehydrogenase/cyclohydrolase family. As to quaternary structure, homodimer.

The enzyme catalyses (6R)-5,10-methylene-5,6,7,8-tetrahydrofolate + NADP(+) = (6R)-5,10-methenyltetrahydrofolate + NADPH. It catalyses the reaction (6R)-5,10-methenyltetrahydrofolate + H2O = (6R)-10-formyltetrahydrofolate + H(+). It participates in one-carbon metabolism; tetrahydrofolate interconversion. Functionally, catalyzes the oxidation of 5,10-methylenetetrahydrofolate to 5,10-methenyltetrahydrofolate and then the hydrolysis of 5,10-methenyltetrahydrofolate to 10-formyltetrahydrofolate. The chain is Bifunctional protein FolD from Thermosynechococcus vestitus (strain NIES-2133 / IAM M-273 / BP-1).